Consider the following 204-residue polypeptide: Guanylate kinase (204 aa).

The region spanning 18-196 (PKLFTISAPA…SYEVLKSIFI (179 aa)) is the Guanylate kinase-like domain. 25 to 32 (APAGAGKT) provides a ligand contact to ATP.

The protein belongs to the guanylate kinase family.

It is found in the cytoplasm. It carries out the reaction GMP + ATP = GDP + ADP. In terms of biological role, essential for recycling GMP and indirectly, cGMP. This is Guanylate kinase from Chlamydia abortus (strain DSM 27085 / S26/3) (Chlamydophila abortus).